A 199-amino-acid polypeptide reads, in one-letter code: Desiccation stress protein DSP-22, chloroplastic (199 aa).

A chloroplast-targeting transit peptide spans 1-52; sequence MASSTCYATIPAMSCRGQSTITRFGPNNLFLGKQSYELPLMRRNAKFTVRSM. The segment covering 53 to 62 has biased composition (basic and acidic residues); it reads REDNEKEEQQ. The disordered stretch occupies residues 53-82; the sequence is REDNEKEEQQQQKQQQTHDGGPDLTPNRTE. A run of 2 helical transmembrane segments spans residues 130-152 and 172-191; these read FNGG…LIPI and IWNG…TEYV.

This sequence belongs to the ELIP/psbS family. In terms of tissue distribution, preferentially localized in the chloroplast-rich palisade parenchyma cells, in extracts of desiccated leaves, in seeds, but not in roots or untreated leaves.

The protein resides in the plastid. The protein localises to the chloroplast thylakoid membrane. Functionally, possibly exerts a protective role during water loss. This is Desiccation stress protein DSP-22, chloroplastic (DSP-22) from Craterostigma plantagineum (Blue gem).